The sequence spans 79 residues: Sulfur carrier protein TusA (79 aa).

Cysteine 15 (cysteine persulfide intermediate) is an active-site residue.

The protein belongs to the sulfur carrier protein TusA family. Interacts with IscS.

The protein resides in the cytoplasm. It functions in the pathway tRNA modification. Sulfur carrier protein involved in sulfur trafficking in the cell. Part of a sulfur-relay system required for 2-thiolation during synthesis of 2-thiouridine of the modified wobble base 5-methylaminomethyl-2-thiouridine (mnm(5)s(2)U) in tRNA. Interacts with IscS and stimulates its cysteine desulfurase activity. Accepts an activated sulfur from IscS, which is then transferred to TusD, and thus determines the direction of sulfur flow from IscS to 2-thiouridine formation. Also appears to be involved in sulfur transfer for the biosynthesis of molybdopterin. This Buchnera aphidicola subsp. Baizongia pistaciae (strain Bp) protein is Sulfur carrier protein TusA.